We begin with the raw amino-acid sequence, 437 residues long: Xylose isomerase (437 aa).

Active-site residues include His-101 and Asp-104. Mg(2+) contacts are provided by Glu-232, Glu-268, His-271, Asp-296, Asp-307, Asp-309, and Asp-339.

The protein belongs to the xylose isomerase family. Homotetramer. The cofactor is Mg(2+).

It localises to the cytoplasm. The catalysed reaction is alpha-D-xylose = alpha-D-xylulofuranose. This Actinobacillus succinogenes (strain ATCC 55618 / DSM 22257 / CCUG 43843 / 130Z) protein is Xylose isomerase.